We begin with the raw amino-acid sequence, 957 residues long: UvrABC system protein A (957 aa).

33-40 (GLSGSGKS) is a binding site for ATP. Residues 252–279 (CPQCGFSIPELEPRMFSFNSPFGACPTC) form a C4-type zinc finger. ABC transporter domains follow at residues 309 to 587 (WEPI…AKSL) and 607 to 935 (PNGR…KYLR). 639 to 646 (GVSGSGKS) serves as a coordination point for ATP. The segment at 738-764 (CEACRGDGIIKIEMHFLPDVYVPCEVC) adopts a C4-type zinc-finger fold.

Belongs to the ABC transporter superfamily. UvrA family. Forms a heterotetramer with UvrB during the search for lesions.

The protein localises to the cytoplasm. Functionally, the UvrABC repair system catalyzes the recognition and processing of DNA lesions. UvrA is an ATPase and a DNA-binding protein. A damage recognition complex composed of 2 UvrA and 2 UvrB subunits scans DNA for abnormalities. When the presence of a lesion has been verified by UvrB, the UvrA molecules dissociate. This chain is UvrABC system protein A, found in Halalkalibacterium halodurans (strain ATCC BAA-125 / DSM 18197 / FERM 7344 / JCM 9153 / C-125) (Bacillus halodurans).